The following is a 320-amino-acid chain: Carbonic anhydrase 6 (320 aa).

Positions Met-1–Ala-17 are cleaved as a signal peptide. An Alpha-carbonic anhydrase domain is found at Ser-21–Phe-278. A disulfide bridge connects residues Cys-42 and Cys-224. His-85 (proton donor/acceptor) is an active-site residue. Zn(2+) is bound by residues His-111, His-113, and His-138. Thr-220–Thr-221 provides a ligand contact to substrate. N-linked (GlcNAc...) asparagine glycosylation is present at Asn-256.

The protein belongs to the alpha-carbonic anhydrase family. Zn(2+) serves as cofactor.

It localises to the secreted. The enzyme catalyses hydrogencarbonate + H(+) = CO2 + H2O. Reversible hydration of carbon dioxide. Its role in saliva is unknown. The sequence is that of Carbonic anhydrase 6 (CA6) from Canis lupus familiaris (Dog).